The chain runs to 309 residues: Putative taste receptor type 2 member 36 (309 aa).

M1 is a topological domain (extracellular). The helical transmembrane segment at 2-22 (ICFLLIILSILVVFAFVLGNF) threads the bilayer. Over 23-46 (SNGFIALVNVIDWVKRQKISSADQ) the chain is Cytoplasmic. Residues 47-67 (ILTALVVSRVGLLWVILLHWY) traverse the membrane as a helical segment. Residues 68–79 (SNVLNSALYSSE) lie on the Extracellular side of the membrane. A helical membrane pass occupies residues 80-100 (VIIFISNAWAIINHFSIWLAT). Residues 101 to 126 (SLSIFYLLKIVNFSRLIFHHLKRKAK) are Cytoplasmic-facing. The chain crosses the membrane as a helical span at residues 127–147 (SVVLVIVLGPLVFLVCHLVMK). At 148–181 (HTYINVWTKEYEGNVTWKIKLRNAIHLSNLTVST) the chain is on the extracellular side. N-linked (GlcNAc...) asparagine glycans are attached at residues N161 and N176. A helical membrane pass occupies residues 182 to 202 (LANLIPFTLTLISFLLLIYSL). Over 203–229 (CKHLKKMQLHGKGSQDPSTKVHIKALQ) the chain is Cytoplasmic. The helical transmembrane segment at 230–250 (TVTSFLLLCAIYFLSMIISVC) threads the bilayer. Residues 251-259 (NFGRLEKQP) lie on the Extracellular side of the membrane. A helical transmembrane segment spans residues 260–280 (VFMFCQAIIFSYPSTHPFILI). The Cytoplasmic portion of the chain corresponds to 281 to 309 (LGNKKLKQIFLSVFWQMRYWVKGEKPSSP).

The protein belongs to the G-protein coupled receptor T2R family.

It localises to the membrane. Putative taste receptor which may play a role in the perception of bitterness. The sequence is that of Putative taste receptor type 2 member 36 from Homo sapiens (Human).